The primary structure comprises 556 residues: Phenylalanine--tRNA ligase beta subunit (556 aa).

Residues 274 to 349 (HEPEEMEVDL…ITLGLNKIGY (76 aa)) form the B5 domain. 4 residues coordinate Mg(2+): D327, D333, E336, and E337.

It belongs to the phenylalanyl-tRNA synthetase beta subunit family. Type 2 subfamily. Tetramer of two alpha and two beta subunits. It depends on Mg(2+) as a cofactor.

Its subcellular location is the cytoplasm. The catalysed reaction is tRNA(Phe) + L-phenylalanine + ATP = L-phenylalanyl-tRNA(Phe) + AMP + diphosphate + H(+). This is Phenylalanine--tRNA ligase beta subunit from Korarchaeum cryptofilum (strain OPF8).